The sequence spans 77 residues: Putative defensin-like protein 60 (77 aa).

A signal peptide spans 1–25; sequence MKMNITKSYVILFLVVVMTNSLSNS. Disulfide bonds link C41–C75, C45–C68, C54–C73, and C58–C74.

Belongs to the DEFL family.

The protein resides in the secreted. The sequence is that of Putative defensin-like protein 60 from Arabidopsis thaliana (Mouse-ear cress).